The following is a 428-amino-acid chain: Glutamyl-tRNA reductase (428 aa).

Substrate contacts are provided by residues 55–58, Ser114, 119–121, and Gln125; these read TCNR and ETQ. The active-site Nucleophile is the Cys56. NADP(+) is bound at residue 194–199; it reads GAGEMI.

Belongs to the glutamyl-tRNA reductase family. In terms of assembly, homodimer.

It catalyses the reaction (S)-4-amino-5-oxopentanoate + tRNA(Glu) + NADP(+) = L-glutamyl-tRNA(Glu) + NADPH + H(+). It functions in the pathway porphyrin-containing compound metabolism; protoporphyrin-IX biosynthesis; 5-aminolevulinate from L-glutamyl-tRNA(Glu): step 1/2. Catalyzes the NADPH-dependent reduction of glutamyl-tRNA(Glu) to glutamate 1-semialdehyde (GSA). The polypeptide is Glutamyl-tRNA reductase (Paraburkholderia phytofirmans (strain DSM 17436 / LMG 22146 / PsJN) (Burkholderia phytofirmans)).